Consider the following 447-residue polypeptide: Protein TIC 40, chloroplastic (447 aa).

Residues 1-43 (MENLTLVSCSASSPKLLIGCNFTSSLKNPTGFSRRTPNIVLRC) constitute a chloroplast transit peptide. The transit peptide at 44–76 (SKISASAQSQSPSSRPENTGEIVVVKQRSKAFA) directs the protein to the chloroplast; inner membrane. Residues 77-104 (SIFSSSRDQQTTSVASPSVPVPPPSSST) lie on the Chloroplast intermembrane side of the membrane. The helical transmembrane segment at 105–125 (IGSPLFWIGVGVGLSALFSYV) threads the bilayer. Topologically, residues 126–447 (TSNLKKYAMQ…ISQLFPGMTG (322 aa)) are stromal. Residues 148 to 160 (QNSQFNNSGFPSG) show a composition bias toward low complexity. 2 disordered regions span residues 148 to 214 (QNSQ…DIEV) and 231 to 261 (KNYA…TNSP). Residues 161-171 (SPFPFPFPPQT) are compositionally biased toward pro residues. Residues 172–186 (SPASSPFQSQSQSSG) are compositionally biased toward low complexity. 2 STI1 domains span residues 310–344 (DPTV…RQQL) and 386–425 (PEEV…IMKY).

In terms of assembly, part of the Tic complex. Interacts with HSP93, TIC110 and LTD. As to expression, expressed in seedlings, flowers, leaves, stems and roots.

The protein resides in the plastid. It localises to the chloroplast inner membrane. Functionally, involved in protein precursor import into chloroplasts. Part of the motor complex consisting of a co-chaperone (TIC40) and a chaperone (HSP93) associated with the import channel (TIC110). Causes the release of bound transit peptides from TIC110 and stimulates ATP hydrolysis by HSP93. Involved in reinsertion of proteins from the chloroplast stroma into the inner membrane. This chain is Protein TIC 40, chloroplastic (TIC40), found in Arabidopsis thaliana (Mouse-ear cress).